Reading from the N-terminus, the 282-residue chain is Elongation factor Ts (282 aa).

The involved in Mg(2+) ion dislocation from EF-Tu stretch occupies residues Thr81–Val84. Residues Lys218–Gly270 show a composition bias toward low complexity. Residues Lys218–Lys282 are disordered. A compositionally biased stretch (basic residues) spans Ser273–Lys282.

Belongs to the EF-Ts family.

It localises to the cytoplasm. Its function is as follows. Associates with the EF-Tu.GDP complex and induces the exchange of GDP to GTP. It remains bound to the aminoacyl-tRNA.EF-Tu.GTP complex up to the GTP hydrolysis stage on the ribosome. The protein is Elongation factor Ts of Synechococcus sp. (strain JA-3-3Ab) (Cyanobacteria bacterium Yellowstone A-Prime).